The following is a 211-amino-acid chain: Degradation in the endoplasmic reticulum protein 1 (211 aa).

The residue at position 1 (Met-1) is an N-acetylmethionine. Residues 1–14 (MDAVILNLLGDIPL) lie on the Cytoplasmic side of the membrane. Residues 15–32 (VTRLWTIGCLVLSGLTSL) form a helical membrane-spanning segment. The Lumenal segment spans residues 33–67 (RIVDPGKVVYSYDLVFKKGQYGRLLYSIFDYGAFN). A helical membrane pass occupies residues 68-85 (WISMINIFVSANHLSTLE). Residues 86–92 (NSFNLRR) are Cytoplasmic-facing. Residues 93-109 (KFCWIIFLLLVILVKMT) traverse the membrane as a helical segment. The Lumenal segment spans residues 110–117 (SIEQPAAS). Residues 118–133 (LGVLLHENLVYYELKK) traverse the membrane as a helical segment. The Cytoplasmic portion of the chain corresponds to 134 to 149 (NGNQMNVRFFGAIDVS). Residues 150-165 (PSIFPIYMNAVMYFVY) form a helical membrane-spanning segment. Over 166–168 (KRS) the chain is Lumenal. A helical membrane pass occupies residues 169-189 (WLEIAMNFMPGHVIYYMDDII). The Cytoplasmic segment spans residues 190-211 (GKIYGIDLCKSPYDWFRNTETP).

This sequence belongs to the derlin family. In terms of assembly, component of the HRD1 ubiquitin ligase complex which contains the E3 ligase HRD1, its cofactors HRD3, USA1 and DER1, substrate recruiting factor YOS9 and CDC48-binding protein UBX2. Within the complex, interacts with USA1 (via C-terminus). In ERAD-L, HRD3 and YOS9 jointly bind misfolded glycoproteins in the endoplasmic reticulum (ER) lumen. Movement of ERAD-L substrates through the ER membrane is facilitated by HRD1 and DER1 which have lateral gates facing each other and which distort the membrane region between the lateral gates, making it much thinner than a normal phospholipid bilayer. Substrates insert into the membrane as a hairpin loop with one strand interacting with DER1 and the other with HRD1. The HRD1 complex interacts with the heterotrimeric CDC48-NPL4-UFD1 ATPase complex which is recruited by UBX2 via its interaction with CDC48 and which moves ubiquitinated substrates to the cytosol for targeting to the proteasome. N-terminally acetylated by acetyltransferase NatB which enhances DER1 stability and is required for ERAD-L function.

Its subcellular location is the endoplasmic reticulum membrane. Functionally, component of the endoplasmic reticulum-associated degradation (ERAD) pathway. Specifically required for the ERAD-L pathway which mediates the degradation of proteins with misfolded lumenal domains within the endoplasmic reticulum (ER). Facilitates retrotranslocation of misfolded proteins from the ER lumen through the ER membrane in conjunction with HRD1. Both proteins have lateral gates facing each other and distort the membrane region between the lateral gates, making it much thinner than a normal phospholipid bilayer. Substrates insert into the membrane as a hairpin loop with one strand interacting with DER1 and the other with HRD1. This chain is Degradation in the endoplasmic reticulum protein 1 (DER1), found in Saccharomyces cerevisiae (strain ATCC 204508 / S288c) (Baker's yeast).